Reading from the N-terminus, the 341-residue chain is L-threonine 3-dehydrogenase (341 aa).

Cys-38 provides a ligand contact to Zn(2+). Catalysis depends on charge relay system residues Thr-40 and His-43. The Zn(2+) site is built by His-63, Glu-64, Cys-93, Cys-96, Cys-99, and Cys-107. Residues Ile-175, Asp-195, Arg-200, 262-264, and 286-287 each bind NAD(+); these read LGI and IY.

Belongs to the zinc-containing alcohol dehydrogenase family. As to quaternary structure, homotetramer. The cofactor is Zn(2+).

The protein resides in the cytoplasm. It catalyses the reaction L-threonine + NAD(+) = (2S)-2-amino-3-oxobutanoate + NADH + H(+). Its pathway is amino-acid degradation; L-threonine degradation via oxydo-reductase pathway; glycine from L-threonine: step 1/2. Catalyzes the NAD(+)-dependent oxidation of L-threonine to 2-amino-3-ketobutyrate. The polypeptide is L-threonine 3-dehydrogenase (Escherichia fergusonii (strain ATCC 35469 / DSM 13698 / CCUG 18766 / IAM 14443 / JCM 21226 / LMG 7866 / NBRC 102419 / NCTC 12128 / CDC 0568-73)).